Here is a 36-residue protein sequence, read N- to C-terminus: Photosystem I reaction center subunit VIII (36 aa).

The chain crosses the membrane as a helical span at residues 10 to 30 (FVPLVGLVFSAIIMVLSFLYI).

The protein belongs to the PsaI family.

It localises to the plastid. Its subcellular location is the chloroplast thylakoid membrane. Functionally, may help in the organization of the PsaL subunit. This chain is Photosystem I reaction center subunit VIII, found in Welwitschia mirabilis (Tree tumbo).